The following is a 532-amino-acid chain: Cytochrome P450 99A2 (532 aa).

The chain crosses the membrane as a helical span at residues 30-50 (SAATLTLVSLLTLPILLALLT). Residue Cys468 coordinates heme. Residues 473–493 (FGMVLLELIVARLLYYFDWSL) traverse the membrane as a helical segment.

It belongs to the cytochrome P450 family. Heme serves as cofactor.

Its subcellular location is the membrane. Functionally, involved in momilactone phytoalexins biosynthesis. Participates in the biosynthetic steps between 9-beta-pimara-7,15-diene and 3-beta-hydroxy-9-beta-pimara-7,15-dien-19,6-beta-olide. This is Cytochrome P450 99A2 (CYP99A2) from Oryza sativa subsp. japonica (Rice).